The sequence spans 964 residues: Protein translocase subunit SecA (964 aa).

ATP contacts are provided by residues Gln86, 104-108 (GEGKT), and Asp494. The interval 848–964 (AESADTIAVA…YKMCHGQNEK (117 aa)) is disordered. Residues 871-882 (AEGEVEEEDEDT) are compositionally biased toward acidic residues. The segment covering 889-900 (AESAAASGAGES) has biased composition (low complexity). Residues Cys947, Cys949, Cys958, and His959 each coordinate Zn(2+).

Belongs to the SecA family. As to quaternary structure, monomer and homodimer. Part of the essential Sec protein translocation apparatus which comprises SecA, SecYEG and auxiliary proteins SecDF. Other proteins may also be involved. The cofactor is Zn(2+).

It localises to the cell membrane. The protein resides in the cytoplasm. The catalysed reaction is ATP + H2O + cellular proteinSide 1 = ADP + phosphate + cellular proteinSide 2.. Functionally, part of the Sec protein translocase complex. Interacts with the SecYEG preprotein conducting channel. Has a central role in coupling the hydrolysis of ATP to the transfer of proteins into and across the cell membrane, serving as an ATP-driven molecular motor driving the stepwise translocation of polypeptide chains across the membrane. This is Protein translocase subunit SecA from Bifidobacterium longum (strain DJO10A).